The sequence spans 238 residues: Probable xyloglucan-specific endo-beta-1,4-glucanase A (238 aa).

An N-terminal signal peptide occupies residues 1-18 (MKLSLSVALSLAAATAQA). N-linked (GlcNAc...) asparagine glycosylation is found at N106 and N171.

The protein belongs to the glycosyl hydrolase 12 (cellulase H) family.

It localises to the secreted. It carries out the reaction xyloglucan + H2O = xyloglucan oligosaccharides.. In terms of biological role, catalyzes endohydrolysis of 1,4-beta-D-glucosidic linkages in xyloglucan with retention of the beta-configuration of the glycosyl residues. Specific for xyloglucan and does not hydrolyze other cell wall components. This Aspergillus fumigatus (strain CBS 144.89 / FGSC A1163 / CEA10) (Neosartorya fumigata) protein is Probable xyloglucan-specific endo-beta-1,4-glucanase A (xgeA).